The following is a 232-amino-acid chain: Beta-casein (232 aa).

The signal sequence occupies residues 1–15; it reads MKLLILACFVALALA. An N-linked (GlcNAc...) asparagine glycan is attached at N22. Position 24 is a phosphoserine (S24). At T27 the chain carries Phosphothreonine. Phosphoserine is present on residues S30, S32, S33, and S34. Basic and acidic residues predominate over residues 48–63; sequence KLKREEQQQTENERQN. Positions 48–74 are disordered; sequence KLKREEQQQTENERQNKIHQFPQPQPL.

Belongs to the beta-casein family. Mammary gland specific. Secreted in milk.

The protein resides in the secreted. Its function is as follows. Important role in determination of the surface properties of the casein micelles. The sequence is that of Beta-casein (CSN2) from Sus scrofa (Pig).